The primary structure comprises 245 residues: PF03932 family protein CutC (245 aa).

The protein belongs to the CutC family.

Its subcellular location is the cytoplasm. In Sinorhizobium medicae (strain WSM419) (Ensifer medicae), this protein is PF03932 family protein CutC.